The following is a 246-amino-acid chain: 1-(5-phosphoribosyl)-5-[(5-phosphoribosylamino)methylideneamino] imidazole-4-carboxamide isomerase (246 aa).

The active-site Proton acceptor is D8. The active-site Proton donor is D130.

It belongs to the HisA/HisF family.

Its subcellular location is the cytoplasm. The catalysed reaction is 1-(5-phospho-beta-D-ribosyl)-5-[(5-phospho-beta-D-ribosylamino)methylideneamino]imidazole-4-carboxamide = 5-[(5-phospho-1-deoxy-D-ribulos-1-ylimino)methylamino]-1-(5-phospho-beta-D-ribosyl)imidazole-4-carboxamide. It participates in amino-acid biosynthesis; L-histidine biosynthesis; L-histidine from 5-phospho-alpha-D-ribose 1-diphosphate: step 4/9. In Shigella dysenteriae serotype 1 (strain Sd197), this protein is 1-(5-phosphoribosyl)-5-[(5-phosphoribosylamino)methylideneamino] imidazole-4-carboxamide isomerase.